A 2215-amino-acid chain; its full sequence is Unconventional myosin-VIIa (2215 aa).

In terms of domain architecture, Myosin motor spans 65-741; it reads HGVEDMIRLG…HDMLLEVERD (677 aa). Residue 158-165 participates in ATP binding; it reads GESGAGKT. Positions 632–639 are actin-binding; sequence FVRCIKPN. IQ domains lie at 745-765, 768-788, 791-811, 814-834, and 837-857; these read TDRVILLQKVIRGFKDRSNFL, KSAATLIQRHWRGHHCRKNYE, RLGFLRLQALHRSRKLHKQYR, RQRIIEFQARCRAYLVRKAFR, and LWAVITVQAYARGMIARRLHR. The SAH stretch occupies residues 858-935; that stretch reads RLRVEYQRRL…LEQMEKARHE (78 aa). Residues 1017-1253 form the MyTH4 1 domain; the sequence is YTRRPLKQPL…PSWLELQATK (237 aa). One can recognise an FERM 1 domain in the interval 1258-1602; sequence IMLPVTFMDG…LVVTFLEGLR (345 aa). At Thr-1563 the chain carries Phosphothreonine. Ser-1569 carries the post-translational modification Phosphoserine. At Thr-1571 the chain carries Phosphothreonine. The 70-residue stretch at 1603-1672 folds into the SH3 domain; sequence KRSKYVVALQ…PTDCVYVMPT (70 aa). The 150-residue stretch at 1747–1896 folds into the MyTH4 2 domain; sequence HTREPLKQAL…PHLVEVEAIQ (150 aa). One can recognise an FERM 2 domain in the interval 1902 to 2205; sequence IFHKVYFPDD…SYISQMLTAM (304 aa).

The protein belongs to the TRAFAC class myosin-kinesin ATPase superfamily. Myosin family. Might homodimerize in a two headed molecule through the formation of a coiled-coil rod. Identified in a complex with USH1C and USH1G. Interacts with MYRIP. Interacts with RPE65. Interacts with CIB2. May interact with CALM. Interacts with WHRN. Interacts with PLEKHB1 (via PH domain). Interacts with PCDH15. Interacts with TWF2. Interacts with USH1G. Interacts with MYH9. Interacts (via MyTH4-FERM domains) with cytoplasmic regions of ADGRV1 and USH2A. Interacts with PDZD7 (via MyTH4-FERM domains). Interacts with CALML4. In terms of tissue distribution, detected in mechanosensory stereocilia of cochlea hair cells (at protein level). Expressed in the retina, cochlea, kidney and liver.

The protein resides in the cytoplasm. The protein localises to the cell cortex. It localises to the cytoskeleton. Its subcellular location is the synapse. Myosins are actin-based motor molecules with ATPase activity. Unconventional myosins serve in intracellular movements. Their highly divergent tails bind to membranous compartments, which are then moved relative to actin filaments. In the retina, plays an important role in the renewal of the outer photoreceptor disks. Plays an important role in the distribution and migration of retinal pigment epithelial (RPE) melanosomes and phagosomes, and in the regulation of opsin transport in retinal photoreceptors. Mediates intracellular transport of RPE65 in the retina pigment epithelium. In the inner ear, plays an important role in differentiation, morphogenesis and organization of cochlear hair cell bundles. Motor protein that is a part of the functional network formed by USH1C, USH1G, CDH23 and MYO7A that mediates mechanotransduction in cochlear hair cells. Required for normal hearing. Involved in hair-cell vesicle trafficking of aminoglycosides, which are known to induce ototoxicity. The chain is Unconventional myosin-VIIa (Myo7a) from Mus musculus (Mouse).